The following is a 481-amino-acid chain: Protein nucleotidyltransferase YdiU (481 aa).

Residues G85, G87, R88, K108, D120, G121, R171, and R178 each coordinate ATP. The active-site Proton acceptor is the D248. Residues N249 and D258 each coordinate Mg(2+). Residue D258 coordinates ATP. A disordered region spans residues 458–481 (HPGLAEFQQPPTPEQKGLQLSCSS).

It belongs to the SELO family. The cofactor is Mg(2+). Mn(2+) serves as cofactor.

The enzyme catalyses L-seryl-[protein] + ATP = 3-O-(5'-adenylyl)-L-seryl-[protein] + diphosphate. It catalyses the reaction L-threonyl-[protein] + ATP = 3-O-(5'-adenylyl)-L-threonyl-[protein] + diphosphate. The catalysed reaction is L-tyrosyl-[protein] + ATP = O-(5'-adenylyl)-L-tyrosyl-[protein] + diphosphate. It carries out the reaction L-histidyl-[protein] + UTP = N(tele)-(5'-uridylyl)-L-histidyl-[protein] + diphosphate. The enzyme catalyses L-seryl-[protein] + UTP = O-(5'-uridylyl)-L-seryl-[protein] + diphosphate. It catalyses the reaction L-tyrosyl-[protein] + UTP = O-(5'-uridylyl)-L-tyrosyl-[protein] + diphosphate. Nucleotidyltransferase involved in the post-translational modification of proteins. It can catalyze the addition of adenosine monophosphate (AMP) or uridine monophosphate (UMP) to a protein, resulting in modifications known as AMPylation and UMPylation. This chain is Protein nucleotidyltransferase YdiU, found in Hydrogenovibrio crunogenus (strain DSM 25203 / XCL-2) (Thiomicrospira crunogena).